The primary structure comprises 461 residues: Argininosuccinate lyase (461 aa).

Belongs to the lyase 1 family. Argininosuccinate lyase subfamily.

The protein resides in the cytoplasm. It carries out the reaction 2-(N(omega)-L-arginino)succinate = fumarate + L-arginine. It functions in the pathway amino-acid biosynthesis; L-arginine biosynthesis; L-arginine from L-ornithine and carbamoyl phosphate: step 3/3. This chain is Argininosuccinate lyase, found in Chloroflexus aurantiacus (strain ATCC 29366 / DSM 635 / J-10-fl).